A 257-amino-acid polypeptide reads, in one-letter code: Flap endonuclease Xni (257 aa).

D109 serves as a coordination point for Mg(2+). The 91-residue stretch at 165 to 255 (LKPEQLADYW…FNLQDIRYEK (91 aa)) folds into the 5'-3' exonuclease domain. K(+) contacts are provided by L176, A177, I187, and I190. An interaction with DNA region spans residues 189–194 (GIGPKA).

It belongs to the Xni family. The cofactor is Mg(2+). Requires K(+) as cofactor.

Its function is as follows. Has flap endonuclease activity. During DNA replication, flap endonucleases cleave the 5'-overhanging flap structure that is generated by displacement synthesis when DNA polymerase encounters the 5'-end of a downstream Okazaki fragment. The polypeptide is Flap endonuclease Xni (Aliivibrio salmonicida (strain LFI1238) (Vibrio salmonicida (strain LFI1238))).